A 490-amino-acid polypeptide reads, in one-letter code: Betaine aldehyde dehydrogenase (490 aa).

Residue aspartate 93 coordinates K(+). Residue 150 to 152 (GAW) participates in NAD(+) binding. The active-site Charge relay system is the lysine 162. An NAD(+)-binding site is contributed by 176–179 (KPSE). Valine 180 serves as a coordination point for K(+). An NAD(+)-binding site is contributed by 230–233 (GIAS). Leucine 246 contributes to the K(+) binding site. The Proton acceptor role is filled by glutamate 252. NAD(+)-binding residues include glycine 254, cysteine 286, and glutamate 387. Cysteine 286 serves as the catalytic Nucleophile. Cysteine 286 bears the Cysteine sulfenic acid (-SOH) mark. Positions 457 and 460 each coordinate K(+). The Charge relay system role is filled by glutamate 464.

The protein belongs to the aldehyde dehydrogenase family. Dimer of dimers. Requires K(+) as cofactor.

It carries out the reaction betaine aldehyde + NAD(+) + H2O = glycine betaine + NADH + 2 H(+). Its pathway is amine and polyamine biosynthesis; betaine biosynthesis via choline pathway; betaine from betaine aldehyde: step 1/1. Functionally, involved in the biosynthesis of the osmoprotectant glycine betaine. Catalyzes the irreversible oxidation of betaine aldehyde to the corresponding acid. This is Betaine aldehyde dehydrogenase from Yersinia pestis.